Reading from the N-terminus, the 450-residue chain is TNF receptor-associated factor family protein DDB_G0273433/DDB_G0273509 (450 aa).

The RING-type; degenerate zinc-finger motif lies at 26–73; the sequence is CQICFNSVIDFKKETLSFDVLQCRNGHISCHECWNRQLSIKQECPSCK. TRAF-type zinc fingers lie at residues 129–185 and 186–243; these read HHLK…KKLN and KHIE…SQLS. Residues 257–297 are a coiled coil; that stretch reads QNVMDLHKLQLDECNQDYRKLEKQNRDLEKRLFYLESTVNS. The MATH domain occupies 319–439; the sequence is VYKGKWVINN…NNSLTISISI (121 aa).

This sequence belongs to the TNF receptor-associated factor family. A subfamily.

The protein resides in the cytoplasm. In terms of biological role, probable adapter protein and signal transducer that links members of the tumor necrosis factor receptor family to different signaling pathways by association with the receptor cytoplasmic domain and kinases. The protein is TNF receptor-associated factor family protein DDB_G0273433/DDB_G0273509 of Dictyostelium discoideum (Social amoeba).